The following is a 486-amino-acid chain: Arginine/agmatine antiporter (486 aa).

12 consecutive transmembrane segments (helical) span residues 12–32 (LGAI…GIFS), 41–61 (AGAG…FFIA), 85–105 (GFGP…QIFG), 129–149 (NTIP…FIVL), 160–180 (IIGT…TAFA), 211–231 (STML…VMSA), 242–262 (ATLL…ILPF), 296–316 (VGLL…VAEI), 341–361 (LSLY…YFST), 367–387 (MLSI…AFLF), 418–438 (LWLI…LLAL), and 461–481 (EVTK…LFST).

Belongs to the amino acid-polyamine-organocation (APC) superfamily. Basic amino acid/polyamine antiporter (APA) (TC 2.A.3.2) family.

It localises to the cell inner membrane. Catalyzes the exchange of L-arginine for agmatine. The arginine uptake by the bacterium in the macrophage may be a virulence factor against the host innate immune response. The polypeptide is Arginine/agmatine antiporter (aaxC) (Chlamydia caviae (strain ATCC VR-813 / DSM 19441 / 03DC25 / GPIC) (Chlamydophila caviae)).